Here is a 2378-residue protein sequence, read N- to C-terminus: Dimodular nonribosomal peptide synthase (2378 aa).

2 Carrier domains span residues 961-1036 (APRT…DLAQ) and 2036-2111 (GPRT…EMGS). Serine 996 and serine 2071 each carry O-(pantetheine 4'-phosphoryl)serine.

It belongs to the ATP-dependent AMP-binding enzyme family. The cofactor is pantetheine 4'-phosphate.

It carries out the reaction holo-[peptidyl-carrier protein] + L-threonine + ATP = L-threonyl-[peptidyl-carrier protein] + AMP + diphosphate. The enzyme catalyses holo-[peptidyl-carrier protein] + glycine + ATP = glycyl-[peptidyl-carrier protein] + AMP + diphosphate. It participates in siderophore biosynthesis; bacillibactin biosynthesis. Its function is as follows. Specifically adenylates L-threonine and, to a lesser extent, glycine and covalently loads both amino acids onto their corresponding peptidyl carrier domains. This is Dimodular nonribosomal peptide synthase (dhbF) from Bacillus subtilis (strain 168).